The primary structure comprises 486 residues: Cytochrome P450 monooxygenase 1 (486 aa).

The signal sequence occupies residues 1–21 (MSHFLPTLILTSLTLVAYVLA). Asn346 is a glycosylation site (N-linked (GlcNAc...) asparagine). Cys430 serves as a coordination point for heme. The N-linked (GlcNAc...) asparagine glycan is linked to Asn434.

Belongs to the cytochrome P450 family. Heme serves as cofactor.

The protein operates within mycotoxin biosynthesis. Its function is as follows. Cytochrome P450 monooxygenase; part of the gene cluster that mediates the biosynthesis of aphidicolin, a specific inhibitor of eukaryotic DNA synthesis and DNA polymerase alpha. The geranylgeranyl pyrophosphate synthase GGS is required for supplying a sufficient amount of geranylgeranyl diphosphate (GGDP), the general precursor of diterpenes. The diterpene synthase ACS then catalyzes the conversion of geranylgeranyl diphosphate to aphidicolan-16-beta-ol via the intermediate syn-copalyldiphosphate (syn-CDP). In addition to aphidicolan-16-beta-ol, the enzyme also produces low levels of amphidicol-15-ene and amphidicol-16-ene. The cytochrome P450 monooxygenase P450-2 then catalyzes the two-step hydroxylation from aphidicolan-16-beta-ol to 3-deoxyaphidicolin via a 17,3-deoxyaphidicolin intermediate. Finally, the cytochrome P450 monooxygenase P450-1 converts 3-deoxyaphidicolin to aphidicolin. The polypeptide is Cytochrome P450 monooxygenase 1 (PbP450-1) (Neocamarosporium betae (Beet black rot fungus)).